The sequence spans 94 residues: Mobilization protein C (94 aa).

Interacts with MobA and MobB to form the relaxosome.

This protein is essential to promote the specific transfer of the plasmid in the presence of conjugative plasmids. The sequence is that of Mobilization protein C (mobC) from Escherichia coli.